The chain runs to 185 residues: ATP synthase subunit b (185 aa).

The helical transmembrane segment at 27 to 47 threads the bilayer; it reads GALIWKGLNILAFLGIVYYFG.

Belongs to the ATPase B chain family. As to quaternary structure, F-type ATPases have 2 components, F(1) - the catalytic core - and F(0) - the membrane proton channel. F(1) has five subunits: alpha(3), beta(3), gamma(1), delta(1), epsilon(1). F(0) has three main subunits: a(1), b(2) and c(10-14). The alpha and beta chains form an alternating ring which encloses part of the gamma chain. F(1) is attached to F(0) by a central stalk formed by the gamma and epsilon chains, while a peripheral stalk is formed by the delta and b chains.

The protein resides in the cell inner membrane. Functionally, f(1)F(0) ATP synthase produces ATP from ADP in the presence of a proton or sodium gradient. F-type ATPases consist of two structural domains, F(1) containing the extramembraneous catalytic core and F(0) containing the membrane proton channel, linked together by a central stalk and a peripheral stalk. During catalysis, ATP synthesis in the catalytic domain of F(1) is coupled via a rotary mechanism of the central stalk subunits to proton translocation. Its function is as follows. Component of the F(0) channel, it forms part of the peripheral stalk, linking F(1) to F(0). In Aquifex aeolicus (strain VF5), this protein is ATP synthase subunit b.